We begin with the raw amino-acid sequence, 469 residues long: Trigger factor (469 aa).

Positions 165–250 (GDCVTIDYLG…VKAISKPDEL (86 aa)) constitute a PPIase FKBP-type domain. Residues 439 to 460 (EYDESDLTEKKPEKKKGVEKTP) show a composition bias toward basic and acidic residues. The segment at 439-469 (EYDESDLTEKKPEKKKGVEKTPIRKKAPKKG) is disordered.

It belongs to the FKBP-type PPIase family. Tig subfamily.

It is found in the cytoplasm. The catalysed reaction is [protein]-peptidylproline (omega=180) = [protein]-peptidylproline (omega=0). Functionally, involved in protein export. Acts as a chaperone by maintaining the newly synthesized protein in an open conformation. Functions as a peptidyl-prolyl cis-trans isomerase. In Bartonella quintana (strain Toulouse) (Rochalimaea quintana), this protein is Trigger factor.